Consider the following 596-residue polypeptide: Nuclear receptor subfamily 2 group C member 2 (596 aa).

Ser-19 carries the phosphoserine; by MAPK modification. Ser-46 carries the post-translational modification Phosphoserine. Ser-55 and Ser-68 each carry phosphoserine; by MAPK. Residue Ser-98 is modified to Phosphoserine. A DNA-binding region (nuclear receptor) is located at residues 114–189 (VEYCVVCGDK…MGMKMESVQS (76 aa)). 2 consecutive NR C4-type zinc fingers follow at residues 117 to 137 (CVVC…CEGC) and 153 to 177 (CRSS…LKKC). Lys-192 is covalently cross-linked (Glycyl lysine isopeptide (Lys-Gly) (interchain with G-Cter in SUMO2)). Ser-219 is modified (phosphoserine). Residue Lys-231 is modified to N6-acetyllysine. Residues 341–583 (GSIHVISRDQ…SIIPYILKME (243 aa)) enclose the NR LBD domain.

Belongs to the nuclear hormone receptor family. NR2 subfamily. Homodimer; can bind DNA as homodimer. Heterodimer; binds DNA as a heterodimer with NR2C1 required for chromatin remodeling and for binding to promoter regions such as globin DR1 repeats. Interacts with NR2C2AP; the interaction represses selective NR2C2-mediated transcriptional activity. Interacts with PCAF; the interaction preferentially occurs on the non-phosphorylated form and induces NR2C2-mediated transactivation activity and does not require the ligand-binding domain. Interacts (MAPK-mediated phosphorylated form) with NRIP1; the interaction promotes repression of NR2C2-mediated activity. Interacts with NLRP10. Interacts (via ligand-binding region) with transcriptional corepressor JAZF1; the interaction promotes NR2C2-mediated transcriptional repression. Post-translationally, phosphorylation on Ser-19 and Ser-68 is an important regulator of NR2C2-mediated transcriptional activity. Phosphorylation on these residues recruits the corepressor, NRIP1, leading to transcripional repression, whereas the non-phosphorylated form preferentially recruits the coactivator, PCAF. Expressed in hepatocytes. Also expressed in granule cells of the hippocampus and the cerebellum.

It is found in the nucleus. Orphan nuclear receptor that can act as a repressor or activator of transcription. An important repressor of nuclear receptor signaling pathways such as retinoic acid receptor, retinoid X, vitamin D3 receptor, thyroid hormone receptor and estrogen receptor pathways. May regulate gene expression during the late phase of spermatogenesis. Activates transcriptional activity of LHCG and is antagonist of PPARA-mediated transactivation. Together with NR2C1, forms the core of the DRED (direct repeat erythroid-definitive) complex that represses embryonic and fetal globin transcription including that of GATA1. Binds to hormone response elements (HREs) consisting of two 5'-AGGTCA-3' half site direct repeat consensus sequences. Plays a fundamental role in early embryonic development and embryonic stem cells. Required for normal spermatogenesis and cerebellum development. Appears to be important for neurodevelopmentally regulated behavior. The chain is Nuclear receptor subfamily 2 group C member 2 (Nr2c2) from Rattus norvegicus (Rat).